A 434-amino-acid chain; its full sequence is MTTLQVASSLNDIAQQTRQAASLLAMLSTEAKNQAIAAVAQALESAKEEILQANIDDCEAATAEGIAKPLYKRLQLDEHKLRDAIAGVRDVGKLADPIGQVQIQRELDTGLVLKRITCPLGVLGIIFEARPEAAIQIISLAIKSGNGVILKCGKEAVRSCEAIVKAVKQGLSTTDVNPEVVQLLTTREETLELLRLDKYVDLIIPRGSNSFVRFVQENTRIPVLGHADGICHVYIDKSADIEKAIAVSVDAKVQYPAACNAIETLLVHQSIAAEFLPKVAQALAEREVELKGDERTLQILPEIAAATAIDWETEYSDFILSIKIVDSLTEAIAHINQYGSRHTDAIITEDVAAVKTFFGLVNSAGVFHNCSTRFADGFRYGFGAEVGISTQQMPPRGPVGLEGLVTYKYQMTGAGHIVATYTGENAKPFTHKDF.

This sequence belongs to the gamma-glutamyl phosphate reductase family.

The protein resides in the cytoplasm. The catalysed reaction is L-glutamate 5-semialdehyde + phosphate + NADP(+) = L-glutamyl 5-phosphate + NADPH + H(+). It functions in the pathway amino-acid biosynthesis; L-proline biosynthesis; L-glutamate 5-semialdehyde from L-glutamate: step 2/2. In terms of biological role, catalyzes the NADPH-dependent reduction of L-glutamate 5-phosphate into L-glutamate 5-semialdehyde and phosphate. The product spontaneously undergoes cyclization to form 1-pyrroline-5-carboxylate. In Nostoc sp. (strain PCC 7120 / SAG 25.82 / UTEX 2576), this protein is Gamma-glutamyl phosphate reductase.